Reading from the N-terminus, the 339-residue chain is Cathepsin L-like peptidase (339 aa).

Residues 1-16 (MKILILLVAFVAAANA) form the signal peptide. The propeptide at 17 to 121 (VSLYELVKEE…VTFIEPANVE (105 aa)) is activation peptide. Asn95 carries N-linked (GlcNAc...) asparagine glycosylation. Disulfide bonds link Cys143–Cys186, Cys177–Cys219, and Cys278–Cys328. Cys146 is a catalytic residue. Catalysis depends on residues His285 and Asn306.

The protein belongs to the peptidase C1 family. In terms of assembly, dimer of a heavy and a light chain linked by disulfide bonds. Interacts with cystatin; the interaction results in inhibition of cathepsin L-like peptidase activity. Salivary gland. Midgut.

It catalyses the reaction Specificity close to that of papain. As compared to cathepsin B, cathepsin L exhibits higher activity toward protein substrates, but has little activity on Z-Arg-Arg-NHMec, and no peptidyl-dipeptidase activity.. Its activity is regulated as follows. More active in the presence of a reducing agent DTT. Its function is as follows. Proteinase exhibiting preference for Leu, Val and Phe residues at the P2 position. This chain is Cathepsin L-like peptidase, found in Aedes aegypti (Yellowfever mosquito).